We begin with the raw amino-acid sequence, 470 residues long: Alpha-1A adrenergic receptor (470 aa).

Residues 1–27 (MTPSSVTLNCSNCSHVLAPELNTVKAV) are Extracellular-facing. Asn-9 and Asn-12 each carry an N-linked (GlcNAc...) asparagine glycan. The helical transmembrane segment at 28–51 (VLGMVLGIFILFGVIGNILVILSV) threads the bilayer. The Cytoplasmic portion of the chain corresponds to 52–64 (VCHRHLQTVTYYF). Residues 65–88 (IVNLAVADLLLSSTVLPFSAIFEI) form a helical membrane-spanning segment. Residues 89 to 99 (LDRWVFGRVFC) are Extracellular-facing. Cysteines 99 and 176 form a disulfide. A helical membrane pass occupies residues 100-122 (NIWAAVDVLCCTASIMSLCVISV). The Cytoplasmic segment spans residues 123-143 (DRYIGVSYPLRYPAIMTKRRA). The chain crosses the membrane as a helical span at residues 144–167 (LLAVMLLWVLSVIISIGPLFGWKE). Topologically, residues 168–181 (PAPEDETVCKITEE) are extracellular. A helical transmembrane segment spans residues 182-205 (PGYAIFSAVGSFYLPLAIILAMYC). Residues 206 to 271 (RVYVVAQKES…FSREKKAAKT (66 aa)) lie on the Cytoplasmic side of the membrane. The chain crosses the membrane as a helical span at residues 272 to 295 (LGIVVGCFVLCWLPFFLVLPIGSI). Residues 296-303 (FPAYRPSD) are Extracellular-facing. Residues 304–327 (TVFKITFWLGYFNSCINPIIYLCS) traverse the membrane as a helical segment. Topologically, residues 328–470 (NQEFKKAFQS…LSLSEKGESV (143 aa)) are cytoplasmic. Cys-343 carries the S-palmitoyl cysteine lipid modification. Residues 375-416 (GAPCRLSPSSSVALSRTPSSRDSREWRVFSGGPINSGPGPTE) are disordered. Over residues 381–392 (SPSSSVALSRTP) the composition is skewed to polar residues.

This sequence belongs to the G-protein coupled receptor 1 family. Adrenergic receptor subfamily. ADRA1A sub-subfamily.

It localises to the cell membrane. Functionally, this alpha-adrenergic receptor mediates its action by association with G proteins that activate a phosphatidylinositol-calcium second messenger system. The sequence is that of Alpha-1A adrenergic receptor (adra1a) from Oryzias latipes (Japanese rice fish).